A 249-amino-acid polypeptide reads, in one-letter code: ATP-dependent Clp protease proteolytic subunit (249 aa).

The active-site Nucleophile is the Ser107. The active site involves His132. The tract at residues 212–249 (ESASQDNSLDPDAPDESASQDNSLDPDAPDETRPPKLR) is disordered.

It belongs to the peptidase S14 family. Component of the chloroplastic Clp protease core complex.

The protein localises to the plastid. Its subcellular location is the chloroplast stroma. The enzyme catalyses Hydrolysis of proteins to small peptides in the presence of ATP and magnesium. alpha-casein is the usual test substrate. In the absence of ATP, only oligopeptides shorter than five residues are hydrolyzed (such as succinyl-Leu-Tyr-|-NHMec, and Leu-Tyr-Leu-|-Tyr-Trp, in which cleavage of the -Tyr-|-Leu- and -Tyr-|-Trp bonds also occurs).. Cleaves peptides in various proteins in a process that requires ATP hydrolysis. Has a chymotrypsin-like activity. Plays a major role in the degradation of misfolded proteins. The chain is ATP-dependent Clp protease proteolytic subunit from Oenothera elata subsp. hookeri (Hooker's evening primrose).